A 256-amino-acid polypeptide reads, in one-letter code: Imidazole glycerol phosphate synthase subunit HisF (256 aa).

Active-site residues include Asp12 and Asp131.

The protein belongs to the HisA/HisF family. In terms of assembly, heterodimer of HisH and HisF.

It localises to the cytoplasm. It carries out the reaction 5-[(5-phospho-1-deoxy-D-ribulos-1-ylimino)methylamino]-1-(5-phospho-beta-D-ribosyl)imidazole-4-carboxamide + L-glutamine = D-erythro-1-(imidazol-4-yl)glycerol 3-phosphate + 5-amino-1-(5-phospho-beta-D-ribosyl)imidazole-4-carboxamide + L-glutamate + H(+). It functions in the pathway amino-acid biosynthesis; L-histidine biosynthesis; L-histidine from 5-phospho-alpha-D-ribose 1-diphosphate: step 5/9. Its function is as follows. IGPS catalyzes the conversion of PRFAR and glutamine to IGP, AICAR and glutamate. The HisF subunit catalyzes the cyclization activity that produces IGP and AICAR from PRFAR using the ammonia provided by the HisH subunit. The chain is Imidazole glycerol phosphate synthase subunit HisF from Beutenbergia cavernae (strain ATCC BAA-8 / DSM 12333 / CCUG 43141 / JCM 11478 / NBRC 16432 / NCIMB 13614 / HKI 0122).